The sequence spans 921 residues: MTEATGIVGEFLTLKEGTDADLLAMQCGDFYEFFAEDAEIVADELDLKVSQKSSHGSSYPMAGVPVDDLTPYVSALVERGYRVAIADQHETENGHAREITRVVTPGTHLETGDESAQYLAAVVREASRDSGDTYGIAATDVTTGQFQVTQLDDADAGEALTELYTFGPAEILPGPELRNDDEFLDRLRERTDAALTLHDSASFEPGRASHTVREQFGSETVDSVGIGDQNVAVRAAGAVLSYVEDTGVGTLAAVTRLQAYGERDHVDLDATTQRNLELTETMQGDSSGSLFDTIDHTVTAAGGRLLQQWLQRPRRNRAELQRRQSCVAALSEAAMARERIRETLSDAYDLERLAARATSGSADARDLRAVQETLALLGQVADAVTETERLAESPLADALDGADREAADSLAAELDSALVADPPGTVRQGGLFKRGHDDDLDEIIDEHEAALEWLETLPDREKERTGITHLSVDRNKTDGYYIQVGKSETDAVPEKYQHIKTLKNSKRYTTPELDEKERDVLRLEERRHDMEYEHFQRLRARVAEHATLLQDVGRTLAELDAFASLAVHAVENDWARPAVVDGNELSIEAGRHPVVEQTTEFVPNDLYMDDDRQFLIVTGPNMSGKSTYMRQAALITLLAQVGSFVPARSATVGLVDGIFTRVGALDELAQGRSTFMVEMQELSNILHSATEESLVILDEVGRGTATFDGISIAWAATEYIVNSIQSKTLFATHYHELTALGEELPTVENVHVAVDGEPRSAGSDGDVTFLRTVRDGPTDRSYGVHVADLAGVPEPVVDRSQAVLDRLRDDKAIEIRGSEQNDGGTTQAVFDLDSGQFRDGAAQSGGAAAGSTAEPVATDGDPEHAPGEAAAEGPKGDERAASLDSETEAVLSELTELDVNETPPVELMAKVQEWQAELDDE.

Residue 619–626 (GPNMSGKS) coordinates ATP. The disordered stretch occupies residues 837–887 (FRDGAAQSGGAAAGSTAEPVATDGDPEHAPGEAAAEGPKGDERAASLDSET). Residues 840 to 853 (GAAQSGGAAAGSTA) show a composition bias toward low complexity.

This sequence belongs to the DNA mismatch repair MutS family.

Functionally, this protein is involved in the repair of mismatches in DNA. It is possible that it carries out the mismatch recognition step. This protein has a weak ATPase activity. The protein is DNA mismatch repair protein MutS 1 of Haloarcula marismortui (strain ATCC 43049 / DSM 3752 / JCM 8966 / VKM B-1809) (Halobacterium marismortui).